A 312-amino-acid chain; its full sequence is Zinc transporter ZitB (312 aa).

The next 6 membrane-spanning stretches (helical) occupy residues 16-36 (LLIA…GGWL), 40-60 (LALL…FIAL), 81-101 (LTTL…ILIV), 117-137 (TPML…FWIL), 153-173 (LHVL…IVIL), and 177-197 (WTPI…RNAW).

The protein belongs to the cation diffusion facilitator (CDF) transporter (TC 2.A.4) family. SLC30A subfamily.

The protein resides in the cell inner membrane. Involved in zinc efflux across the cytoplasmic membrane, thus reducing zinc accumulation in the cytoplasm and rendering bacteria more resistant to zinc. It may contribute to zinc homeostasis at low concentrations of zinc. The polypeptide is Zinc transporter ZitB (Yersinia pseudotuberculosis serotype I (strain IP32953)).